The sequence spans 396 residues: Elongation factor Tu (396 aa).

The 195-residue stretch at K11–E205 folds into the tr-type G domain. The tract at residues G20–T27 is G1. Residue G20 to T27 coordinates GTP. T27 is a binding site for Mg(2+). Residues G61–N65 are G2. Positions D82–G85 are G3. GTP is bound by residues D82 to H86 and N137 to D140. Positions N137 to D140 are G4. Residues S175–L177 form a G5 region.

This sequence belongs to the TRAFAC class translation factor GTPase superfamily. Classic translation factor GTPase family. EF-Tu/EF-1A subfamily. Monomer.

Its subcellular location is the cytoplasm. It catalyses the reaction GTP + H2O = GDP + phosphate + H(+). In terms of biological role, GTP hydrolase that promotes the GTP-dependent binding of aminoacyl-tRNA to the A-site of ribosomes during protein biosynthesis. This chain is Elongation factor Tu, found in Lactobacillus gasseri (strain ATCC 33323 / DSM 20243 / BCRC 14619 / CIP 102991 / JCM 1131 / KCTC 3163 / NCIMB 11718 / NCTC 13722 / AM63).